The primary structure comprises 300 residues: DDRGK domain-containing protein 1 (300 aa).

Topologically, residues 1-2 are lumenal; sequence MD. The helical transmembrane segment at 3 to 23 threads the bilayer; that stretch reads VVLYIAAAAILLVLIVFSVKI. Residues 24–300 lie on the Cytoplasmic side of the membrane; sequence RGRTQDADVE…NLTPDIHSSA (277 aa). The disordered stretch occupies residues 28 to 173; that stretch reads QDADVEDHQN…RVKEEQERRE (146 aa). Residues 78–90 are compositionally biased toward acidic residues; it reads NEDSPVEADEDEE. A compositionally biased stretch (basic and acidic residues) spans 112-173; sequence KLEEKQARKA…RVKEEQERRE (62 aa). The short motif at 183–197 is the UFM1-interacting motif (UFIM) element; the sequence is SFIIEDQGEAEELTE. In terms of domain architecture, PCI spans 217-261; it reads VLLEDLASQFGLRTQDAIARLQDLIADGSLTGVIDDRGKFIFITP.

Belongs to the DDRGK1 family. As to quaternary structure, component of the UFM1 ribosome E3 ligase (UREL) complex, composed of ufl1, ddrgk1 and cdk5rap3.

The protein resides in the endoplasmic reticulum membrane. Functionally, component of the UFM1 ribosome E3 ligase (UREL) complex, a multiprotein complex that catalyzes ufmylation of endoplasmic reticulum-docked proteins. The UREL complex plays a key role in ribosome recycling by mediating mono-ufmylation of the RPL26/uL24 subunit of the 60S ribosome following ribosome dissociation: ufmylation weakens the junction between post-termination 60S subunits and SEC61 translocons, promoting release and recycling of the large ribosomal subunit from the endoplasmic reticulum membrane. Ufmylation of RPL26/uL24 and subsequent 60S ribosome recycling either take place after normal termination of translation or after ribosome stalling during cotranslational translocation at the endoplasmic reticulum. Within the UREL complex, DDRGK1 tethers the complex to the endoplasmic reticulum membrane to restrict its activity to endoplasmic reticulum-docked ribosomes and acts as an ufmylation 'reader': following RPL26/uL24 ufmylation, DDRGK1 specifically binds to ufmylated RPL26/uL24 via its UFIM motif, resulting in stable association between the 60S ribosome and the UREL complex, followed by dissociation of the 60S ribosome subunit from the endoplasmic reticulum membrane. The UREL complex is also involved in reticulophagy in response to endoplasmic reticulum stress by promoting ufmylation of proteins such as CYB5R3 and RPN1, thereby promoting lysosomal degradation of ufmylated proteins. Plays a role in cartilage development through sox9, inhibiting the ubiquitin-mediated proteasomal degradation of this transcriptional regulator. Required for stabilization and ufmylation of ATG9A. This is DDRGK domain-containing protein 1 from Danio rerio (Zebrafish).